Here is a 599-residue protein sequence, read N- to C-terminus: Elongation factor 4 (599 aa).

Residues 2–184 (KHIRNFSIIA…RLVRDIPAPE (183 aa)) form the tr-type G domain. GTP-binding positions include 14 to 19 (DHGKST) and 131 to 134 (NKID).

The protein belongs to the TRAFAC class translation factor GTPase superfamily. Classic translation factor GTPase family. LepA subfamily.

It is found in the cell inner membrane. It carries out the reaction GTP + H2O = GDP + phosphate + H(+). In terms of biological role, required for accurate and efficient protein synthesis under certain stress conditions. May act as a fidelity factor of the translation reaction, by catalyzing a one-codon backward translocation of tRNAs on improperly translocated ribosomes. Back-translocation proceeds from a post-translocation (POST) complex to a pre-translocation (PRE) complex, thus giving elongation factor G a second chance to translocate the tRNAs correctly. Binds to ribosomes in a GTP-dependent manner. This is Elongation factor 4 from Yersinia pestis bv. Antiqua (strain Antiqua).